The primary structure comprises 363 residues: Chorismate synthase (363 aa).

NADP(+) is bound by residues Arg48 and Arg54. FMN contacts are provided by residues 125-127, 237-238, Gly277, 292-296, and Arg318; these read RSS, NA, and KPTSS.

It belongs to the chorismate synthase family. As to quaternary structure, homotetramer. FMNH2 serves as cofactor.

It catalyses the reaction 5-O-(1-carboxyvinyl)-3-phosphoshikimate = chorismate + phosphate. The protein operates within metabolic intermediate biosynthesis; chorismate biosynthesis; chorismate from D-erythrose 4-phosphate and phosphoenolpyruvate: step 7/7. In terms of biological role, catalyzes the anti-1,4-elimination of the C-3 phosphate and the C-6 proR hydrogen from 5-enolpyruvylshikimate-3-phosphate (EPSP) to yield chorismate, which is the branch point compound that serves as the starting substrate for the three terminal pathways of aromatic amino acid biosynthesis. This reaction introduces a second double bond into the aromatic ring system. In Pseudomonas savastanoi pv. phaseolicola (strain 1448A / Race 6) (Pseudomonas syringae pv. phaseolicola (strain 1448A / Race 6)), this protein is Chorismate synthase.